A 622-amino-acid polypeptide reads, in one-letter code: Apical membrane antigen 1 (622 aa).

An N-terminal signal peptide occupies residues 1–24 (MRKLYCVLLLSAFEFTYMINFGRG). Over 25–546 (QNYWEHPYQK…EHKPTYDKMK (522 aa)) the chain is Extracellular. 5 disulfide bridges follow: Cys149–Cys302, Cys217–Cys247, Cys263–Cys275, Cys320–Cys418, and Cys337–Cys409. An N-linked (GlcNAc...) asparagine glycan is attached at Asn162. Residues Asn286, Asn371, Asn421, Asn422, and Asn499 are each glycosylated (N-linked (GlcNAc...) asparagine). 3 cysteine pairs are disulfide-bonded: Cys443–Cys502, Cys490–Cys507, and Cys492–Cys509. Residues 547–567 (IIIASSAAVAVLATILMVYLY) form a helical membrane-spanning segment. The Cytoplasmic segment spans residues 568–622 (KRKGNAEKYDKMDEPQDYGKSNSRNDEMLDPEASFWGEEKRASHTTPVLMEKPYY). Positions 577 to 607 (DKMDEPQDYGKSNSRNDEMLDPEASFWGEEK) are disordered.

Belongs to the apicomplexan parasites AMA1 family.

The protein resides in the membrane. Involved in parasite invasion of erythrocytes. This is Apical membrane antigen 1 (AMA-1) from Plasmodium falciparum (isolate 7G8).